The chain runs to 239 residues: Glucosamine-6-phosphate deaminase (239 aa).

Aspartate 62 acts as the Proton acceptor; for enolization step in catalysis. Asparagine 128 acts as the For ring-opening step in catalysis. The Proton acceptor; for ring-opening step role is filled by histidine 130. Glutamate 135 (for ring-opening step) is an active-site residue.

Belongs to the glucosamine/galactosamine-6-phosphate isomerase family. NagB subfamily.

The enzyme catalyses alpha-D-glucosamine 6-phosphate + H2O = beta-D-fructose 6-phosphate + NH4(+). The protein operates within amino-sugar metabolism; N-acetylneuraminate degradation; D-fructose 6-phosphate from N-acetylneuraminate: step 5/5. Catalyzes the reversible isomerization-deamination of glucosamine 6-phosphate (GlcN6P) to form fructose 6-phosphate (Fru6P) and ammonium ion. This Lactobacillus helveticus (strain DPC 4571) protein is Glucosamine-6-phosphate deaminase.